Consider the following 441-residue polypeptide: Hexane cyclase gkaB (441 aa).

The signal sequence occupies residues 1 to 25 (MTKFLAGAAIVLAVAFGSFFSQSST). Residues Asn77, Asn153, Asn184, and Asn308 are each glycosylated (N-linked (GlcNAc...) asparagine).

It belongs to the Diels-Alderase family.

It functions in the pathway mycotoxin biosynthesis. Functionally, hexane cyclase; part of the gene cluster that mediates the biosynthesis of GKK1032, fungal natural products containing a macrocyclic para-cyclophane connected to a decahydrofluorene ring system that show potent antitumor activities. Within the pathway, gkaB functions synergistically with gkaX and gkaZ to form the cyclophane. The pathway begins with the PKS-NRPS gkaA which, with the help of the trans-enoyl reductase gkaC, synthesizes the polyketide-tyrosyl acyl thioester product which can be reductively off-loaded by the terminal reductase (R) domain in gkaA. The alpha/beta hydrolase gkaG is then required to catalyze the subsequent Knoevenagel condensation that affords the 3-pyrrolin-2-one ring, whereas the three proteins gkaB, gkaX and gkaZ then function synergistically to form the cyclophane. The chain is Hexane cyclase gkaB from Penicillium citrinum.